The chain runs to 96 residues: Co-chaperonin GroES (96 aa).

It belongs to the GroES chaperonin family. In terms of assembly, heptamer of 7 subunits arranged in a ring. Interacts with the chaperonin GroEL.

Its subcellular location is the cytoplasm. Functionally, together with the chaperonin GroEL, plays an essential role in assisting protein folding. The GroEL-GroES system forms a nano-cage that allows encapsulation of the non-native substrate proteins and provides a physical environment optimized to promote and accelerate protein folding. GroES binds to the apical surface of the GroEL ring, thereby capping the opening of the GroEL channel. This Legionella pneumophila (strain Paris) protein is Co-chaperonin GroES.